We begin with the raw amino-acid sequence, 841 residues long: Auxin response factor 24 (841 aa).

A disordered region spans residues 109-140; the sequence is LPEKQQDGNGSGNGNVSKDKVEEEEVVPPAAT. Residues 148-250 constitute a DNA-binding region (TF-B3); the sequence is FCKTLTASDT…ELRVGVRRAM (103 aa). 3 disordered regions span residues 366 to 397, 663 to 715, and 804 to 841; these read PRPD…KRAR, QDAL…SRSC, and GALN…SENC. Residues 684–695 are compositionally biased toward basic and acidic residues; it reads AQHDSAREKHQS. Polar residues-rich tracts occupy residues 701–713 and 830–841; these read KNIQ…GSSR and GLSTPSLNSENC. In terms of domain architecture, PB1 spans 713–797; sequence RSCKKVHKQG…HKIFIYTREE (85 aa).

It belongs to the ARF family. In terms of assembly, homodimers and heterodimers. Expressed in roots, culms, leaves and young panicles.

Its subcellular location is the nucleus. Its function is as follows. Auxin response factors (ARFs) are transcriptional factors that bind specifically to the DNA sequence 5'-TGTCTC-3' found in the auxin-responsive promoter elements (AuxREs). The sequence is that of Auxin response factor 24 (ARF24) from Oryza sativa subsp. japonica (Rice).